The sequence spans 442 residues: Chromosomal replication initiator protein DnaA (442 aa).

The domain I, interacts with DnaA modulators stretch occupies residues 1–84 (MSVLWSHCIS…LEIGSRAAEA (84 aa)). Residues 84–105 (AAQMRSANPPRKTAPARKQVPN) are domain II. The tract at residues 106–322 (NLNSAFIFGN…GALRRVIANA (217 aa)) is domain III, AAA+ region. Residues Gly150, Gly152, Lys153, and Thr154 each contribute to the ATP site. The domain IV, binds dsDNA stretch occupies residues 323 to 442 (QFTGRPITLE…FSNLLRILSN (120 aa)).

This sequence belongs to the DnaA family. In terms of assembly, oligomerizes as a right-handed, spiral filament on DNA at oriC.

The protein resides in the cytoplasm. Its function is as follows. Plays an essential role in the initiation and regulation of chromosomal replication. ATP-DnaA binds to the origin of replication (oriC) to initiate formation of the DNA replication initiation complex once per cell cycle. Binds the DnaA box (a 9 base pair repeat at the origin) and separates the double-stranded (ds)DNA. Forms a right-handed helical filament on oriC DNA; dsDNA binds to the exterior of the filament while single-stranded (ss)DNA is stabiized in the filament's interior. The ATP-DnaA-oriC complex binds and stabilizes one strand of the AT-rich DNA unwinding element (DUE), permitting loading of DNA polymerase. After initiation quickly degrades to an ADP-DnaA complex that is not apt for DNA replication. Binds acidic phospholipids. This chain is Chromosomal replication initiator protein DnaA, found in Methylococcus capsulatus (strain ATCC 33009 / NCIMB 11132 / Bath).